The chain runs to 517 residues: Protein MGF 505-2R (517 aa).

The protein belongs to the asfivirus MGF 505 family.

Plays a role in virus cell tropism, and may be required for efficient virus replication in macrophages. The polypeptide is Protein MGF 505-2R (Ornithodoros (relapsing fever ticks)).